Here is a 153-residue protein sequence, read N- to C-terminus: MKKVMATGTFDLLHPGHGIYLNEAKKLGGEDAKLYVVIARDSTVEKRKRYPIVGEQQRLELIKMIKGVDEAYLGNENGDFLKIVEEINPDIIAIGADQRHDITKLQKAINKRGLKAKVERVKAYHNAELDSSCKIIKKIKKMDFKGKINDNCD.

Residues 9-10, 14-17, Asp-97, and Tyr-124 each bind ATP; these read TF and HPGH.

The protein belongs to the archaeal FAD synthase family. As to quaternary structure, homodimer. The cofactor is a divalent metal cation.

The catalysed reaction is FMN + ATP + H(+) = FAD + diphosphate. The protein operates within cofactor biosynthesis; FAD biosynthesis; FAD from FMN: step 1/1. In terms of biological role, catalyzes the transfer of the AMP portion of ATP to flavin mononucleotide (FMN) to produce flavin adenine dinucleotide (FAD) coenzyme. This is FAD synthase from Methanobrevibacter smithii (strain ATCC 35061 / DSM 861 / OCM 144 / PS).